A 188-amino-acid polypeptide reads, in one-letter code: Insulin-like growth factor 1 (188 aa).

Residues 45 to 73 (GPETLCGAELVDTLQFVCGERGFYFSKPT) form a b region. Disulfide bonds link cysteine 50–cysteine 92, cysteine 62–cysteine 105, and cysteine 91–cysteine 96. Residues 74 to 85 (GYGPSSRRSHNR) form a c region. The segment at 86-106 (GIVDECCFQSCELRRLEMYCA) is a. Residues 107-114 (PVKSGKAA) are d. A propeptide spans 115 to 188 (RSVRAQRHTD…GNTGGRNYRM (74 aa)) (e peptide). The tract at residues 115 to 188 (RSVRAQRHTD…GNTGGRNYRM (74 aa)) is disordered. Positions 140-153 (RGTERRTAQHPDKT) are enriched in basic and acidic residues.

This sequence belongs to the insulin family. In terms of tissue distribution, all the isoforms are expressed in embryos, juvenile and adult liver, muscle and brain. At least one isoform is expressed in heart, kidney, testes, ovary, adipose tissue and spleen of juvenile salmon.

The protein localises to the secreted. The insulin-like growth factors, isolated from plasma, are structurally and functionally related to insulin but have a much higher growth-promoting activity. Acts as a ligand for IGF1R. Binds to the alpha subunit of IGF1R, leading to the activation of the intrinsic tyrosine kinase activity which autophosphorylates tyrosine residues in the beta subunit thus initiatiating a cascade of down-stream signaling events leading to activation of the PI3K-AKT/PKB and the Ras-MAPK pathways. Binds to integrins. Its binding to integrins and subsequent ternary complex formation with integrins and IGFR1 are essential for IGF1 signaling. The chain is Insulin-like growth factor 1 from Oncorhynchus kisutch (Coho salmon).